Here is a 141-residue protein sequence, read N- to C-terminus: Putative pre-16S rRNA nuclease (141 aa).

It belongs to the YqgF nuclease family.

Its subcellular location is the cytoplasm. In terms of biological role, could be a nuclease involved in processing of the 5'-end of pre-16S rRNA. This chain is Putative pre-16S rRNA nuclease, found in Cupriavidus pinatubonensis (strain JMP 134 / LMG 1197) (Cupriavidus necator (strain JMP 134)).